The sequence spans 338 residues: Fructose-1,6-bisphosphatase class 1 (338 aa).

Glu90, Asp112, Leu114, and Asp115 together coordinate Mg(2+). Substrate-binding positions include 115-118 (DGSS), Asn207, and Lys273. A Mg(2+)-binding site is contributed by Glu279.

The protein belongs to the FBPase class 1 family. In terms of assembly, homotetramer. Mg(2+) serves as cofactor.

The protein resides in the cytoplasm. It carries out the reaction beta-D-fructose 1,6-bisphosphate + H2O = beta-D-fructose 6-phosphate + phosphate. Its pathway is carbohydrate biosynthesis; gluconeogenesis. The sequence is that of Fructose-1,6-bisphosphatase class 1 from Stenotrophomonas maltophilia (strain K279a).